The primary structure comprises 441 residues: 23S rRNA (uracil(1939)-C(5))-methyltransferase RlmD (441 aa).

In terms of domain architecture, TRAM spans 1-56 (MSIDSLDMEARGVGRLLNEDGTPGKVIFVEGALPGETVSYRSFRRKPSYEQAHLVE). [4Fe-4S] cluster contacts are provided by Cys-69, Cys-75, Cys-78, and Cys-157. The S-adenosyl-L-methionine site is built by Gln-265, Phe-294, Asn-299, Glu-315, Asn-343, and Asp-364. Residue Cys-397 is the Nucleophile of the active site.

It belongs to the class I-like SAM-binding methyltransferase superfamily. RNA M5U methyltransferase family. RlmD subfamily.

The enzyme catalyses uridine(1939) in 23S rRNA + S-adenosyl-L-methionine = 5-methyluridine(1939) in 23S rRNA + S-adenosyl-L-homocysteine + H(+). Catalyzes the formation of 5-methyl-uridine at position 1939 (m5U1939) in 23S rRNA. The polypeptide is 23S rRNA (uracil(1939)-C(5))-methyltransferase RlmD (Cupriavidus necator (strain ATCC 17699 / DSM 428 / KCTC 22496 / NCIMB 10442 / H16 / Stanier 337) (Ralstonia eutropha)).